The primary structure comprises 400 residues: Phosphoglycerate kinase (400 aa).

Substrate contacts are provided by residues 21–23 (DFN), arginine 37, 60–63 (HFGR), arginine 119, and arginine 152. ATP contacts are provided by residues lysine 205, glycine 296, glutamate 327, and 353–356 (GGDT).

This sequence belongs to the phosphoglycerate kinase family. Monomer.

The protein localises to the cytoplasm. The enzyme catalyses (2R)-3-phosphoglycerate + ATP = (2R)-3-phospho-glyceroyl phosphate + ADP. It participates in carbohydrate degradation; glycolysis; pyruvate from D-glyceraldehyde 3-phosphate: step 2/5. The chain is Phosphoglycerate kinase from Aliarcobacter butzleri (strain RM4018) (Arcobacter butzleri).